We begin with the raw amino-acid sequence, 213 residues long: Thymidylate kinase (213 aa).

Residue 10–17 (GLEGAGKT) participates in ATP binding.

It belongs to the thymidylate kinase family.

The enzyme catalyses dTMP + ATP = dTDP + ADP. In terms of biological role, phosphorylation of dTMP to form dTDP in both de novo and salvage pathways of dTTP synthesis. The sequence is that of Thymidylate kinase from Enterobacter sp. (strain 638).